Consider the following 223-residue polypeptide: Ribonuclease 3 (223 aa).

Residues 5–127 form the RNase III domain; sequence LQRLEKKIGY…IIGAIYLDSD (123 aa). Glu-40 contributes to the Mg(2+) binding site. Asp-44 is a catalytic residue. Mg(2+) contacts are provided by Asp-113 and Glu-116. The active site involves Glu-116. Positions 154–223 constitute a DRBM domain; sequence DPKTRLQEYL…AADIALGQLN (70 aa).

Belongs to the ribonuclease III family. As to quaternary structure, homodimer. Mg(2+) is required as a cofactor.

The protein resides in the cytoplasm. It carries out the reaction Endonucleolytic cleavage to 5'-phosphomonoester.. Digests double-stranded RNA. Involved in the processing of primary rRNA transcript to yield the immediate precursors to the large and small rRNAs (23S and 16S). Processes some mRNAs, and tRNAs when they are encoded in the rRNA operon. Processes pre-crRNA and tracrRNA of type II CRISPR loci if present in the organism. The protein is Ribonuclease 3 of Aliivibrio fischeri (strain ATCC 700601 / ES114) (Vibrio fischeri).